Consider the following 137-residue polypeptide: MAKEFGRPQRVSQELQKEIAIILQREIKDPRLGMMVTVSGVDVSRDLAYAKVFVTFLNDKDEAAIKGGLRALGDASGYIRTLLGKAMRLRIVPELTFFYDNSLVEGMRMSNLVTNVVRNDEERRGPAEENPEEGKAE.

It belongs to the RbfA family. Monomer. Binds 30S ribosomal subunits, but not 50S ribosomal subunits or 70S ribosomes.

It localises to the cytoplasm. One of several proteins that assist in the late maturation steps of the functional core of the 30S ribosomal subunit. Associates with free 30S ribosomal subunits (but not with 30S subunits that are part of 70S ribosomes or polysomes). Required for efficient processing of 16S rRNA. May interact with the 5'-terminal helix region of 16S rRNA. The protein is Ribosome-binding factor A of Erwinia tasmaniensis (strain DSM 17950 / CFBP 7177 / CIP 109463 / NCPPB 4357 / Et1/99).